The sequence spans 185 residues: MDTSHYWSSRPLSELTGSEHHWLFLPGALTPRLKAMGDYSIEVVEQSHGPLNPEEAQALNVSPNTIGWVREVVMKLDGEACVTARSLTSVPALNGDWADLNGYGRRPLAEILYTSEQTLREPFQCALLPPGAPLAALSYRYAPQAERLLARRSRFTRNGSALLVSECFLPAFWARVEYAQALKSA.

Arg-70, Leu-108, and Glu-166 together coordinate substrate.

Belongs to the UbiC family.

Its subcellular location is the cytoplasm. The enzyme catalyses chorismate = 4-hydroxybenzoate + pyruvate. Its pathway is cofactor biosynthesis; ubiquinone biosynthesis. Its function is as follows. Removes the pyruvyl group from chorismate, with concomitant aromatization of the ring, to provide 4-hydroxybenzoate (4HB) for the ubiquinone pathway. The protein is Probable chorismate pyruvate-lyase 1 of Pseudomonas fluorescens (strain Pf0-1).